A 180-amino-acid polypeptide reads, in one-letter code: Bifunctional protein PyrR (180 aa).

Positions Val-99–Thr-111 match the PRPP-binding motif.

The protein belongs to the purine/pyrimidine phosphoribosyltransferase family. PyrR subfamily. In terms of assembly, homodimer and homohexamer; in equilibrium.

The enzyme catalyses UMP + diphosphate = 5-phospho-alpha-D-ribose 1-diphosphate + uracil. Regulates transcriptional attenuation of the pyrimidine nucleotide (pyr) operon by binding in a uridine-dependent manner to specific sites on pyr mRNA. This disrupts an antiterminator hairpin in the RNA and favors formation of a downstream transcription terminator, leading to a reduced expression of downstream genes. In terms of biological role, also displays a weak uracil phosphoribosyltransferase activity which is not physiologically significant. This is Bifunctional protein PyrR from Clostridium botulinum (strain Alaska E43 / Type E3).